The following is a 230-amino-acid chain: Large ribosomal subunit protein uL1 (230 aa).

The protein belongs to the universal ribosomal protein uL1 family. Part of the 50S ribosomal subunit.

In terms of biological role, binds directly to 23S rRNA. The L1 stalk is quite mobile in the ribosome, and is involved in E site tRNA release. Its function is as follows. Protein L1 is also a translational repressor protein, it controls the translation of the L11 operon by binding to its mRNA. The polypeptide is Large ribosomal subunit protein uL1 (Nitrosomonas europaea (strain ATCC 19718 / CIP 103999 / KCTC 2705 / NBRC 14298)).